The following is a 273-amino-acid chain: Protein ALUMINUM SENSITIVE 3 (273 aa).

Transmembrane regions (helical) follow at residues 14 to 34, 51 to 71, 76 to 96, 107 to 127, 136 to 156, 191 to 213, and 228 to 248; these read WLIV…VVLL, IYSV…LQFI, NSGW…YTAG, YVAG…LVLL, YMIP…GVTM, ALVI…SLPG, and AIQL…VSSI.

Belongs to the UPF0014 family. Expressed in roots, leaves, stems, and flowers.

The protein localises to the cell membrane. Functionally, required for aluminum (Al) resistance/tolerance, probably by translocating Al from sensitive tissues such as growing roots to tissues less sensisitive to the toxic effects of Al. The polypeptide is Protein ALUMINUM SENSITIVE 3 (ALS3) (Arabidopsis thaliana (Mouse-ear cress)).